Consider the following 244-residue polypeptide: MASLLGVLCGWGTRPEEQQYEMIRAAAPPSEAEPRLQEALAVVNALLPAPITLDDALESLDDTRRLVKARALARTYHACMVNLERLARHHPGLEGSTIDGAVAAHRDKMRRLADTCMATILQMYMSVGAADKSADVLVSQAIRSMAESDVVMEDVAIAERALGLSTSALAGGTRTAGLGATEAPPGPTRAQAPEVASVPVTHAGDRSPVRPGPVPPADPTPDPRHRTSAPKRQASSTEAPLLLA.

C9 carries S-palmitoyl cysteine; by host lipidation. The segment at 175–244 is disordered; the sequence is TAGLGATEAP…SSTEAPLLLA (70 aa). The span at 210–220 shows a compositional bias: pro residues; sequence RPGPVPPADPT.

It belongs to the herpesviridae UL51 family. As to quaternary structure, oligomerizes. Interacts with UL7; this interaction mediates UL7 incorporation to virions. Phosphorylated. Post-translationally, palmitoylation is necessary for Golgi localization.

Its subcellular location is the virion tegument. The protein localises to the host cytoplasm. It localises to the host Golgi apparatus. Plays several roles during the time course of infection, including egress of virus particles from the perinuclear space and secondary envelopment of cytoplasmic capsids that bud into specific trans-Golgi network (TGN)-derived membranes. The chain is Tegument protein UL51 from Human herpesvirus 2 (strain HG52) (HHV-2).